The sequence spans 540 residues: CTP synthase (540 aa).

An amidoligase domain region spans residues 1 to 266; the sequence is MAVKYIFVTG…LTPIARHLEL (266 aa). Residue serine 14 coordinates CTP. Residue serine 14 coordinates UTP. ATP-binding positions include 15-20 and aspartate 72; that span reads SLGKGI. 2 residues coordinate Mg(2+): aspartate 72 and glutamate 140. CTP-binding positions include 147-149, 187-192, and lysine 223; these read DIE and KTKPTQ. UTP-binding positions include 187 to 192 and lysine 223; that span reads KTKPTQ. In terms of domain architecture, Glutamine amidotransferase type-1 spans 291–540; it reads TIGFVGKYLS…VKETLAHKKT (250 aa). L-glutamine is bound at residue glycine 351. The active-site Nucleophile; for glutamine hydrolysis is cysteine 378. L-glutamine is bound by residues 379-382, glutamate 402, and arginine 470; that span reads LGMQ. Residues histidine 513 and glutamate 515 contribute to the active site.

The protein belongs to the CTP synthase family. As to quaternary structure, homotetramer.

The enzyme catalyses UTP + L-glutamine + ATP + H2O = CTP + L-glutamate + ADP + phosphate + 2 H(+). The catalysed reaction is L-glutamine + H2O = L-glutamate + NH4(+). It carries out the reaction UTP + NH4(+) + ATP = CTP + ADP + phosphate + 2 H(+). It participates in pyrimidine metabolism; CTP biosynthesis via de novo pathway; CTP from UDP: step 2/2. Allosterically activated by GTP, when glutamine is the substrate; GTP has no effect on the reaction when ammonia is the substrate. The allosteric effector GTP functions by stabilizing the protein conformation that binds the tetrahedral intermediate(s) formed during glutamine hydrolysis. Inhibited by the product CTP, via allosteric rather than competitive inhibition. Catalyzes the ATP-dependent amination of UTP to CTP with either L-glutamine or ammonia as the source of nitrogen. Regulates intracellular CTP levels through interactions with the four ribonucleotide triphosphates. The polypeptide is CTP synthase (Helicobacter hepaticus (strain ATCC 51449 / 3B1)).